Consider the following 730-residue polypeptide: Elongation factor 2 (730 aa).

A tr-type G domain is found at 19 to 228 (TKIRNIGIVA…TGVSFKDVYD (210 aa)). GTP-binding positions include 28 to 35 (AHIDHGKT), 94 to 98 (DTPGH), and 148 to 151 (NKVD). Histidine 596 is modified (diphthamide).

The protein belongs to the TRAFAC class translation factor GTPase superfamily. Classic translation factor GTPase family. EF-G/EF-2 subfamily.

It is found in the cytoplasm. Its function is as follows. Catalyzes the GTP-dependent ribosomal translocation step during translation elongation. During this step, the ribosome changes from the pre-translocational (PRE) to the post-translocational (POST) state as the newly formed A-site-bound peptidyl-tRNA and P-site-bound deacylated tRNA move to the P and E sites, respectively. Catalyzes the coordinated movement of the two tRNA molecules, the mRNA and conformational changes in the ribosome. This chain is Elongation factor 2, found in Methanosarcina barkeri (strain Fusaro / DSM 804).